Here is a 303-residue protein sequence, read N- to C-terminus: Probable endonuclease 4 (303 aa).

9 residues coordinate Zn(2+): His78, His118, Glu154, Asp188, His191, His222, Asp235, His237, and Glu267.

This sequence belongs to the AP endonuclease 2 family. Zn(2+) is required as a cofactor.

It catalyses the reaction Endonucleolytic cleavage to 5'-phosphooligonucleotide end-products.. Endonuclease IV plays a role in DNA repair. It cleaves phosphodiester bonds at apurinic or apyrimidinic (AP) sites, generating a 3'-hydroxyl group and a 5'-terminal sugar phosphate. This is Probable endonuclease 4 from Mycoplasmoides gallisepticum (strain R(low / passage 15 / clone 2)) (Mycoplasma gallisepticum).